A 74-amino-acid polypeptide reads, in one-letter code: Exodeoxyribonuclease 7 small subunit (74 aa).

It belongs to the XseB family. Heterooligomer composed of large and small subunits.

Its subcellular location is the cytoplasm. It catalyses the reaction Exonucleolytic cleavage in either 5'- to 3'- or 3'- to 5'-direction to yield nucleoside 5'-phosphates.. Functionally, bidirectionally degrades single-stranded DNA into large acid-insoluble oligonucleotides, which are then degraded further into small acid-soluble oligonucleotides. The sequence is that of Exodeoxyribonuclease 7 small subunit from Thermotoga neapolitana (strain ATCC 49049 / DSM 4359 / NBRC 107923 / NS-E).